Reading from the N-terminus, the 562-residue chain is MSGTILENLSGRKLSILVGSLLLCQVLCFLLGGLYAPVPAGHTNVLGSLCRENHARQNDTSFFLYSRGEGSCTQVTREEVEQDSMKLANQIVHVFQMPLPRDSRVLDYSRWQQNLIGVLQVEFGYDSSSELREPPKELQLTIDMRLAYRNKGDPDHAWKLYAHGVEHRYLDCVAAHIGSSETLYTCDMIPLFELGALHHSFYLLNLRFPLDTPKQMNLQFGHMHDLTLTAIHQNGGFTHVWLMLKTLLFPFVVGIMVWFWRRVHLLQRSPALLEYMLLYLGGALTFLNLPLEYLSLTIEMPYMLLLSDIRQGIFYAMLLSFWLVFAGEHMLIQDSHNKSTIRSRYWKHLSAVVVGCISLFVFDISERGVQLRNPFYSIWTTPLGAKVAMSFILLAGVSAAVYFLFLCYMISKVFKNIGDKRTSLPSMSQARRLHYEGLIYRFKFLMLATLLCAALTVTGFIMGQMAEGQWKWNDDVEIQLTSAFLTGVYGMWNIYIFALLILYAPSHKQWPTMHHSDETTQSNENIVASAASEEIEFSNLPSDSNPSEISSLTSFTRKVAFE.

The Cytoplasmic portion of the chain corresponds to 1–13 (MSGTILENLSGRK). Residues 14–34 (LSILVGSLLLCQVLCFLLGGL) traverse the membrane as a helical segment. Residues 35–239 (YAPVPAGHTN…AIHQNGGFTH (205 aa)) are Lumenal-facing. Residue Asn58 is glycosylated (N-linked (GlcNAc...) asparagine). The helical transmembrane segment at 240-260 (VWLMLKTLLFPFVVGIMVWFW) threads the bilayer. Residues 261 to 270 (RRVHLLQRSP) lie on the Cytoplasmic side of the membrane. A helical transmembrane segment spans residues 271–291 (ALLEYMLLYLGGALTFLNLPL). At 292–311 (EYLSLTIEMPYMLLLSDIRQ) the chain is on the lumenal side. The helical transmembrane segment at 312–332 (GIFYAMLLSFWLVFAGEHMLI) threads the bilayer. The Cytoplasmic segment spans residues 333-344 (QDSHNKSTIRSR). The helical transmembrane segment at 345–365 (YWKHLSAVVVGCISLFVFDIS) threads the bilayer. Topologically, residues 366–386 (ERGVQLRNPFYSIWTTPLGAK) are lumenal. Residues 387-407 (VAMSFILLAGVSAAVYFLFLC) form a helical membrane-spanning segment. Residues 408–441 (YMISKVFKNIGDKRTSLPSMSQARRLHYEGLIYR) lie on the Cytoplasmic side of the membrane. A helical transmembrane segment spans residues 442–462 (FKFLMLATLLCAALTVTGFIM). Over 463–482 (GQMAEGQWKWNDDVEIQLTS) the chain is Lumenal. A helical membrane pass occupies residues 483–503 (AFLTGVYGMWNIYIFALLILY). Residues 504 to 562 (APSHKQWPTMHHSDETTQSNENIVASAASEEIEFSNLPSDSNPSEISSLTSFTRKVAFE) are Cytoplasmic-facing. A disordered region spans residues 538 to 562 (SNLPSDSNPSEISSLTSFTRKVAFE). Over residues 539–556 (NLPSDSNPSEISSLTSFT) the composition is skewed to polar residues.

It belongs to the wntless family. As to quaternary structure, interacts with wg; in the Golgi. Interacts with Vps35, a component of the retromer complex; wls stability is regulated by Vps35.

It is found in the presynaptic cell membrane. It localises to the postsynaptic cell membrane. Its subcellular location is the cell membrane. The protein resides in the endoplasmic reticulum membrane. The protein localises to the endosome membrane. It is found in the golgi apparatus membrane. A segment polarity gene required for wingless (wg)-dependent patterning processes, acting in both wg-sending cells and wg-target cells. In non-neuronal cells wls directs wg secretion. The wls traffic loop encompasses the Golgi, the cell surface, an endocytic compartment and a retrograde route leading back to the Golgi, and involves clathrin-mediated endocytosis and the retromer complex (a conserved protein complex consisting of Vps35 and Vps26). In neuronal cells (the larval motorneuron NMJ), the wg signal moves across the synapse via the release of wls-containing exosome-like vesicles. Postsynaptic wls is required for the trafficking of fz2 through the fz2-interacting protein Grip. In Drosophila persimilis (Fruit fly), this protein is Protein wntless.